Consider the following 492-residue polypeptide: MRSDQIRQGRLAGERSGDLEHFLASMDADRWIARADLLVDMAHLLGLSRQGIIDEAPARALMAALLDLYDHGVPEEAFDERFEDVHAGKEAYLIDRVGEDFGGRLHMGRSRNDEVATCIRIRLKEEIIALLRSLVDLRATLLDVAAGHTGTVMPGFTHLQHAQPTTLAHYLLAYEQAFSRDTARLREAYARVDVSPLGSAAFASTGFPLDRAYTASLLGFSRPAGNSMDAVAARDFAIEVLADASICMTSTSRLCEELVLWSTAFVGFVRLDDAYCSSSSIMPQKKNPDVAEIMRAKAGSVAGSLAAAITITKGLPMSYNRDLQELTPHLWRGVEAARQSIPLLSGMLGSATFDAERMAAEAGRGFSTATELADVLVREYGLPFRTAHRIVGRAVRHGSLDLATLEAAAREAADFSVVELGLTREKIDAVLDPRHAVAVRNIVGGPAPEAVAAQISEQRNLLARDKAWAEETESALSGAFEHLILEARRFAA.

This sequence belongs to the lyase 1 family. Argininosuccinate lyase subfamily.

It localises to the cytoplasm. It catalyses the reaction 2-(N(omega)-L-arginino)succinate = fumarate + L-arginine. It participates in amino-acid biosynthesis; L-arginine biosynthesis; L-arginine from L-ornithine and carbamoyl phosphate: step 3/3. The chain is Argininosuccinate lyase from Methanoculleus marisnigri (strain ATCC 35101 / DSM 1498 / JR1).